Reading from the N-terminus, the 91-residue chain is MKTLLVRISGKVQGVWYRGWTVETAKGLGLAGWVRNRADGTVEALFHGPEAAVEAMLIACRGGPPSARVDDLRVTPVAAPDQPGFSQKPSL.

The Acylphosphatase-like domain occupies 3–89; it reads TLLVRISGKV…PDQPGFSQKP (87 aa). Residues Arg18 and Asn36 contribute to the active site.

It belongs to the acylphosphatase family.

The catalysed reaction is an acyl phosphate + H2O = a carboxylate + phosphate + H(+). This Rhodospirillum rubrum (strain ATCC 11170 / ATH 1.1.1 / DSM 467 / LMG 4362 / NCIMB 8255 / S1) protein is Acylphosphatase (acyP).